The following is a 1024-amino-acid chain: Error-prone DNA polymerase (1024 aa).

This sequence belongs to the DNA polymerase type-C family. DnaE2 subfamily.

It is found in the cytoplasm. The enzyme catalyses DNA(n) + a 2'-deoxyribonucleoside 5'-triphosphate = DNA(n+1) + diphosphate. In terms of biological role, DNA polymerase involved in damage-induced mutagenesis and translesion synthesis (TLS). It is not the major replicative DNA polymerase. The chain is Error-prone DNA polymerase from Vibrio campbellii (strain ATCC BAA-1116).